We begin with the raw amino-acid sequence, 103 residues long: Large ribosomal subunit protein uL23 (103 aa).

Belongs to the universal ribosomal protein uL23 family. Part of the 50S ribosomal subunit. Contacts protein L29, and trigger factor when it is bound to the ribosome.

One of the early assembly proteins it binds 23S rRNA. One of the proteins that surrounds the polypeptide exit tunnel on the outside of the ribosome. Forms the main docking site for trigger factor binding to the ribosome. The protein is Large ribosomal subunit protein uL23 of Pelodictyon phaeoclathratiforme (strain DSM 5477 / BU-1).